Consider the following 136-residue polypeptide: Large ribosomal subunit protein uL16 (136 aa).

It belongs to the universal ribosomal protein uL16 family. As to quaternary structure, part of the 50S ribosomal subunit.

Its function is as follows. Binds 23S rRNA and is also seen to make contacts with the A and possibly P site tRNAs. This Ehrlichia ruminantium (strain Gardel) protein is Large ribosomal subunit protein uL16.